The sequence spans 194 residues: Large ribosomal subunit protein bL25 (194 aa).

This sequence belongs to the bacterial ribosomal protein bL25 family. CTC subfamily. Part of the 50S ribosomal subunit; part of the 5S rRNA/L5/L18/L25 subcomplex. Contacts the 5S rRNA. Binds to the 5S rRNA independently of L5 and L18.

In terms of biological role, this is one of the proteins that binds to the 5S RNA in the ribosome where it forms part of the central protuberance. The polypeptide is Large ribosomal subunit protein bL25 (Neorickettsia sennetsu (strain ATCC VR-367 / Miyayama) (Ehrlichia sennetsu)).